The primary structure comprises 150 residues: Lipoprotein signal peptidase (150 aa).

3 consecutive transmembrane segments (helical) span residues L5–V25, Q59–W79, and A83–I103. Residues D113 and D129 contribute to the active site. The helical transmembrane segment at I124–L144 threads the bilayer.

The protein belongs to the peptidase A8 family.

It is found in the cell membrane. The enzyme catalyses Release of signal peptides from bacterial membrane prolipoproteins. Hydrolyzes -Xaa-Yaa-Zaa-|-(S,diacylglyceryl)Cys-, in which Xaa is hydrophobic (preferably Leu), and Yaa (Ala or Ser) and Zaa (Gly or Ala) have small, neutral side chains.. It participates in protein modification; lipoprotein biosynthesis (signal peptide cleavage). In terms of biological role, this protein specifically catalyzes the removal of signal peptides from prolipoproteins. In Lactococcus lactis subsp. lactis (strain IL1403) (Streptococcus lactis), this protein is Lipoprotein signal peptidase.